The chain runs to 197 residues: MEAFTTHTGRAVPLRRSNVDTDQIIPAHWLKKVTRDGFEDGLFEAWRKDESFILNRPERTGATVLVAGPDFGTGSSREHAVWALQNYGFKAVISSRFADIFRGNSLKNGLLTVVLEQKIVDALWELTEKDPQAEVTVDLEAREVRAEGITAAFELDENARWRLLNGLDDISITLQNEGDIATYEAKRPSHKPRTLQV.

It belongs to the LeuD family. LeuD type 1 subfamily. Heterodimer of LeuC and LeuD.

The enzyme catalyses (2R,3S)-3-isopropylmalate = (2S)-2-isopropylmalate. It participates in amino-acid biosynthesis; L-leucine biosynthesis; L-leucine from 3-methyl-2-oxobutanoate: step 2/4. Catalyzes the isomerization between 2-isopropylmalate and 3-isopropylmalate, via the formation of 2-isopropylmaleate. The protein is 3-isopropylmalate dehydratase small subunit of Streptomyces avermitilis (strain ATCC 31267 / DSM 46492 / JCM 5070 / NBRC 14893 / NCIMB 12804 / NRRL 8165 / MA-4680).